We begin with the raw amino-acid sequence, 305 residues long: NDP-polyphosphate phosphotransferase 1 (305 aa).

This sequence belongs to the polyphosphate kinase 2 (PPK2) family. Class I subfamily.

The catalysed reaction is [phosphate](n) + ATP = [phosphate](n+1) + ADP. It catalyses the reaction [phosphate](n) + CTP = [phosphate](n+1) + CDP. It carries out the reaction [phosphate](n) + GTP = [phosphate](n+1) + GDP. The enzyme catalyses [phosphate](n) + UTP = [phosphate](n+1) + UDP. With respect to regulation, shows little dependence on metals. In terms of biological role, uses inorganic polyphosphate (polyP) as a donor to convert NDP to NTP. PolyP hydrolysis is slightly faster with GDP, but it can also use ADP, CDP and UDP. In Ruegeria pomeroyi (strain ATCC 700808 / DSM 15171 / DSS-3) (Silicibacter pomeroyi), this protein is NDP-polyphosphate phosphotransferase 1.